A 388-amino-acid polypeptide reads, in one-letter code: RNA binding motif protein, X-linked-like-1 (388 aa).

The region spanning 8-86 (GKLFIGGLNT…KAIKVEQATK (79 aa)) is the RRM domain. Basic and acidic residues predominate over residues 61-80 (DAKDVARDMNGKSLDGKAIK). Residues 61–388 (DAKDVARDMN…SDRGGGQKQI (328 aa)) form a disordered region. Lysine 80 participates in a covalent cross-link: Glycyl lysine isopeptide (Lys-Gly) (interchain with G-Cter in SUMO2). A Phosphoserine modification is found at serine 88. Residues 148-161 (RGPPPRSGGPPPKR) are compositionally biased toward pro residues. Basic and acidic residues-rich tracts occupy residues 191–212 (PRRE…DGYS) and 238–271 (YTYR…EYSD). Positions 320-332 (SRDSYSSSRSDLY) are enriched in low complexity. Composition is skewed to basic and acidic residues over residues 333-344 (SSDRDRVGRQER) and 377-388 (SRSDRGGGQKQI).

It localises to the nucleus. RNA-binding protein which may be involved in pre-mRNA splicing. The chain is RNA binding motif protein, X-linked-like-1 (Rbmxl1) from Rattus norvegicus (Rat).